Consider the following 422-residue polypeptide: Beclin-1-like protein (422 aa).

Residues 119–243 (MLEIMDRELR…KQQLDKLRDT (125 aa)) are a coiled coil. Residues 182–201 (QSLNDAIAEEEQEREELHEQ) are disordered.

It belongs to the beclin family. As to quaternary structure, interacts with Rab18, preferentially binding to the GTP-bound form.

In terms of biological role, plays a central role in autophagy. The polypeptide is Beclin-1-like protein (Drosophila melanogaster (Fruit fly)).